The following is a 395-amino-acid chain: Biotin biosynthesis cytochrome P450 (395 aa).

R60 serves as a coordination point for substrate. A heme-binding site is contributed by 89 to 93 (HRRLR). A substrate-binding site is contributed by 169-173 (IDFTR). Residues C250 and C275 are joined by a disulfide bond. 285 to 287 (TAR) contributes to the heme binding site. Y307 is a binding site for substrate. Residues 343-345 (HVC) and C345 each bind heme.

It depends on heme as a cofactor.

The catalysed reaction is a C2-C8-saturated long-chain fatty acyl-[ACP] + 2 reduced [flavodoxin] + 3 O2 = 6-carboxyhexanoyl-[ACP] + a fatty aldehyde + 2 oxidized [flavodoxin] + 3 H2O + 3 H(+). It functions in the pathway cofactor biosynthesis; biotin biosynthesis. Its function is as follows. Catalyzes the C-C bond cleavage of fatty acid linked to acyl carrier protein (ACP) to generate pimelic acid for biotin biosynthesis. It has high affinity for long-chain fatty acids with the greatest affinity for myristic acid. The chain is Biotin biosynthesis cytochrome P450 (bioI) from Bacillus subtilis (strain 168).